The primary structure comprises 363 residues: 3-dehydroquinate synthase (363 aa).

NAD(+) contacts are provided by residues 75–80, 109–113, 133–134, Lys-146, Lys-155, and 173–176; these read DAEEGK, GAVTD, TS, and TLST. The Zn(2+) site is built by Glu-188, His-251, and His-267.

This sequence belongs to the sugar phosphate cyclases superfamily. Dehydroquinate synthase family. The cofactor is Co(2+). Requires Zn(2+) as cofactor. It depends on NAD(+) as a cofactor.

The protein localises to the cytoplasm. It catalyses the reaction 7-phospho-2-dehydro-3-deoxy-D-arabino-heptonate = 3-dehydroquinate + phosphate. It functions in the pathway metabolic intermediate biosynthesis; chorismate biosynthesis; chorismate from D-erythrose 4-phosphate and phosphoenolpyruvate: step 2/7. Functionally, catalyzes the conversion of 3-deoxy-D-arabino-heptulosonate 7-phosphate (DAHP) to dehydroquinate (DHQ). The sequence is that of 3-dehydroquinate synthase from Arthrobacter sp. (strain FB24).